A 1216-amino-acid chain; its full sequence is RAB11-binding protein RELCH (1216 aa).

2 disordered regions span residues methionine 1–glycine 73 and glycine 135–arginine 177. Alanine 2 is subject to N-acetylalanine. Serine 20 and serine 22 each carry phosphoserine. Residues aspartate 21–alanine 31 are compositionally biased toward acidic residues. Phosphothreonine is present on threonine 32. Phosphoserine occurs at positions 54 and 56. Gly residues predominate over residues glycine 148–glycine 163. Serine 180 and serine 182 each carry phosphoserine. Residue threonine 183 is modified to Phosphothreonine. Serine 186 is modified (phosphoserine). A coiled-coil region spans residues asparagine 197–histidine 231. Residues glutamate 255–aspartate 287 enclose the LisH domain. Residues valine 359–isoleucine 397 adopt a coiled-coil conformation. Serine 385 carries the phosphoserine modification. The disordered stretch occupies residues cysteine 401–histidine 477. The segment covering leucine 411–aspartate 435 has biased composition (basic and acidic residues). A Phosphoserine modification is found at serine 453. Positions cysteine 497–valine 779 are interaction with RAB11A and RAB11B. HEAT repeat units lie at residues leucine 601–leucine 639 and valine 640–glutamine 679. Serine 792 is modified (phosphoserine). The HEAT 3 repeat unit spans residues valine 1004 to arginine 1042. Serine 1149 is subject to Phosphoserine.

The protein resides in the recycling endosome. It is found in the golgi apparatus. It localises to the trans-Golgi network. Its function is as follows. Regulates intracellular cholesterol distribution from recycling endosomes to the trans-Golgi network through interactions with RAB11 and OSBP. Functions in membrane tethering and promotes OSBP-mediated cholesterol transfer between RAB11-bound recycling endosomes and OSBP-bound Golgi-like membranes. The sequence is that of RAB11-binding protein RELCH from Homo sapiens (Human).